The primary structure comprises 305 residues: Ribonuclease BN (305 aa).

Residues His63, His65, Asp67, His68, His141, Asp212, and His270 each contribute to the Zn(2+) site. Asp67 (proton acceptor) is an active-site residue.

The protein belongs to the RNase Z family. RNase BN subfamily. In terms of assembly, homodimer. Zn(2+) is required as a cofactor.

Its function is as follows. Zinc phosphodiesterase, which has both exoribonuclease and endoribonuclease activities. The protein is Ribonuclease BN of Proteus mirabilis (strain HI4320).